We begin with the raw amino-acid sequence, 252 residues long: Short-chain dehydrogenase/reductase eriH (252 aa).

NADP(+)-binding residues include isoleucine 16, aspartate 65, asparagine 92, lysine 125, tyrosine 158, lysine 162, valine 191, and threonine 193. Tyrosine 158 (proton acceptor) is an active-site residue. Residue tyrosine 158 is the Proton donor of the active site. The active-site Lowers pKa of active site Tyr is the lysine 162.

It belongs to the short-chain dehydrogenases/reductases (SDR) family.

It carries out the reaction cyathadiol + reduced [NADPH--hemoprotein reductase] + O2 = cyathatriol + oxidized [NADPH--hemoprotein reductase] + H2O + H(+). It catalyses the reaction 11-O-acetylcyathatriol + A = 11-O-acetylcyathin A3 + AH2. The enzyme catalyses cyathatriol + A = cyathin A3 + AH2. It functions in the pathway secondary metabolite biosynthesis. Short-chain dehydrogenase/reductase; part of the gene cluster that mediates the biosynthesis of erinacines, cyathane-xylosides that show unique biological activities, including leishmanicidal activity, stimulating activity for nerve growth-factor synthesis, and agonistic activity toward the kappa opioid receptor. Within the pathway, eriH works with eriA to catalyze C-11 hydroxylation of cyathadiol to produce cyathatriol. EriH also catalyzes oxidation of 11-O-acetyl-cyathatriol into 1-O-acetylcyathin A3. In the absence of eriL and eriJ, the SDR eriH is able to convert cyathatriol to cyathin A3; this is likely a switching mechanism in the biosynthesis of cyathins (C-14 ketogroup)and erinacines (C-14 glycosylated group). The first step of the erinacines biosynthesis pathway is catalyzed by the geranylgeranyl diphosphate (GGPP) synthase eriE via conversion of farnesyl pyrophosphate and isopentyl pyrophosphate into geranylgeranyl pyrophosphate (GGPP). GGPP is then substrate of the diterpene cyclase eriG for the production of cyatha-3,12-diene. The cytochrome P450 monooxygenase eriI then hydroxylates cyatha-3,12-diene at C-14 of the seven-membered ring to produce erinacol, which is further hydroxylated at C-15 by the cytochrome P450 monooxygenase eriC to yield cyathadiol. The cytochrome P450 monooxygenase eriA then catalyzes C-11 hydroxylation in the presence of the short chain dehydrogenase/reductase (SDR) eriH, which leads to the production of cyathatriol. The acetyltransferase eriL converts cyathatriol into 11-O-acetyl-cyathatriol. The SDR eriH catalyzes further oxidation of 11-O-acetyl-cyathatriol into 1-O-acetylcyathin A3. Finally, the glycosyl transferase eriJ tranfers xylose from UDP-xylose onto C-14 of 11-O-acetyl-cyathatriol to form eracine Q. EriJ is also able to convert 11-O-acetyl-cyathatriol to eracine Q2 by using UDP-D-glucose as cosubstrate, but at a lower rate. The sequence is that of Short-chain dehydrogenase/reductase eriH from Hericium erinaceus (Lion's mane mushroom).